A 178-amino-acid polypeptide reads, in one-letter code: Large ribosomal subunit protein uL6 (178 aa).

The protein belongs to the universal ribosomal protein uL6 family. Part of the 50S ribosomal subunit.

In terms of biological role, this protein binds to the 23S rRNA, and is important in its secondary structure. It is located near the subunit interface in the base of the L7/L12 stalk, and near the tRNA binding site of the peptidyltransferase center. In Corynebacterium urealyticum (strain ATCC 43042 / DSM 7109), this protein is Large ribosomal subunit protein uL6.